We begin with the raw amino-acid sequence, 295 residues long: Outer surface protein B (295 aa).

Residues 1-16 form the signal peptide; it reads MKQYLLGFTLVFALIA. The N-palmitoyl cysteine moiety is linked to residue Cys-17. Residue Cys-17 is the site of S-diacylglycerol cysteine attachment.

It is found in the cell outer membrane. This is Outer surface protein B (ospB) from Borreliella burgdorferi (Lyme disease spirochete).